We begin with the raw amino-acid sequence, 265 residues long: Chlorophyll a-b binding protein 1C, chloroplastic (265 aa).

A chloroplast-targeting transit peptide spans 1 to 34 (MAAATMALSSPSFAGQAVKLSPSASEISGNGRIT). Residues 151–171 (LVHAQSILAIWACQVVLMGAV) form a helical membrane-spanning segment. Residues Val152, Ser156, Gln164, Glu172, Arg175, and Leu181 each coordinate chlorophyll b. The chlorophyll a site is built by Lys212, Glu213, Asn216, Arg218, Gln230, His245, and Ala254. The chain crosses the membrane as a helical span at residues 219 to 239 (LAMFSMFGFFVQAIVTGKGPL). Residue Phe261 participates in chlorophyll b binding.

The protein belongs to the light-harvesting chlorophyll a/b-binding (LHC) protein family. As to quaternary structure, the LHC complex consists of chlorophyll a-b binding proteins. Binds at least 14 chlorophylls (8 Chl-a and 6 Chl-b) and carotenoids such as lutein and neoxanthin. is required as a cofactor. Post-translationally, photoregulated by reversible phosphorylation of its threonine residues.

It is found in the plastid. The protein localises to the chloroplast thylakoid membrane. In terms of biological role, the light-harvesting complex (LHC) functions as a light receptor, it captures and delivers excitation energy to photosystems with which it is closely associated. The protein is Chlorophyll a-b binding protein 1C, chloroplastic (CAB1C) of Solanum lycopersicum (Tomato).